The following is a 190-amino-acid chain: dCTP deaminase (190 aa).

DCTP is bound at residue 113–118 (KSTYAR). Glu139 acts as the Proton donor/acceptor in catalysis. Residues Gln158, Tyr172, Lys181, and Gln182 each contribute to the dCTP site.

The protein belongs to the dCTP deaminase family. In terms of assembly, homotrimer.

The catalysed reaction is dCTP + H2O + H(+) = dUTP + NH4(+). It functions in the pathway pyrimidine metabolism; dUMP biosynthesis; dUMP from dCTP (dUTP route): step 1/2. Its function is as follows. Catalyzes the deamination of dCTP to dUTP. The protein is dCTP deaminase of Chlamydia trachomatis serovar A (strain ATCC VR-571B / DSM 19440 / HAR-13).